The chain runs to 435 residues: 5-methylthioadenosine/S-adenosylhomocysteine deaminase (435 aa).

2 residues coordinate Zn(2+): H65 and H67. The substrate site is built by E94, R150, and H189. Residue H216 coordinates Zn(2+). Positions 219 and 304 each coordinate substrate. A Zn(2+)-binding site is contributed by D304.

This sequence belongs to the metallo-dependent hydrolases superfamily. MTA/SAH deaminase family. Zn(2+) is required as a cofactor.

The catalysed reaction is S-adenosyl-L-homocysteine + H2O + H(+) = S-inosyl-L-homocysteine + NH4(+). It catalyses the reaction S-methyl-5'-thioadenosine + H2O + H(+) = S-methyl-5'-thioinosine + NH4(+). In terms of biological role, catalyzes the deamination of 5-methylthioadenosine and S-adenosyl-L-homocysteine into 5-methylthioinosine and S-inosyl-L-homocysteine, respectively. Is also able to deaminate adenosine. This Bacillus cytotoxicus (strain DSM 22905 / CIP 110041 / 391-98 / NVH 391-98) protein is 5-methylthioadenosine/S-adenosylhomocysteine deaminase.